The sequence spans 185 residues: MTTIVSVRRNNKVVIAGDGQVSLGNTVMKGNARKVRRLYNNKVLAGFAGGTADAFTLFERFESKLQMHQGHLTKAAVELAKDWRSDRALRRLEAILAVADETASLIITGNGDVLQPEHDLIAIGSGGNYAQAAAIALLENTELDARTIAEKALNIAGDICVFTNHHHTIEELEIPQAMLPQGASA.

The active site involves Thr2. Na(+) is bound by residues Gly157, Cys160, and Thr163.

The protein belongs to the peptidase T1B family. HslV subfamily. A double ring-shaped homohexamer of HslV is capped on each side by a ring-shaped HslU homohexamer. The assembly of the HslU/HslV complex is dependent on binding of ATP.

The protein resides in the cytoplasm. It catalyses the reaction ATP-dependent cleavage of peptide bonds with broad specificity.. Allosterically activated by HslU binding. Functionally, protease subunit of a proteasome-like degradation complex believed to be a general protein degrading machinery. This Vibrio cholerae serotype O1 (strain ATCC 39315 / El Tor Inaba N16961) protein is ATP-dependent protease subunit HslV.